The chain runs to 146 residues: NADH-quinone oxidoreductase subunit A (146 aa).

3 helical membrane-spanning segments follow: residues 14–34, 66–86, and 96–116; these read FAVFFVVAIGLCCLMLMGAFF, FYLVAMFFVIFDVEALYLYAW, and VGFIEAAIFILVLLAGLVYLV.

It belongs to the complex I subunit 3 family. In terms of assembly, NDH-1 is composed of 13 different subunits. Subunits NuoA, H, J, K, L, M, N constitute the membrane sector of the complex.

It localises to the cell inner membrane. The enzyme catalyses a quinone + NADH + 5 H(+)(in) = a quinol + NAD(+) + 4 H(+)(out). Functionally, NDH-1 shuttles electrons from NADH, via FMN and iron-sulfur (Fe-S) centers, to quinones in the respiratory chain. The immediate electron acceptor for the enzyme in this species is believed to be ubiquinone. Couples the redox reaction to proton translocation (for every two electrons transferred, four hydrogen ions are translocated across the cytoplasmic membrane), and thus conserves the redox energy in a proton gradient. The sequence is that of NADH-quinone oxidoreductase subunit A from Serratia proteamaculans (strain 568).